A 299-amino-acid chain; its full sequence is MAILIGERPAQALWRDYLELTKPKVVVLMLITSLVGMFLATRAGVPWTVLVFGNLGIALCAGGAAAVNHVVDRRIDAVMARTHKRPLADGRVSPTGALTFALVLALLGQALLLTFTNPLTAWLTLASLLGYAVIYTGFLKRATPQNIVIGGLAGAAPPLLGWTAATGHVSAEPLLLVLIIFAWTPPHFWALAIHRKEEYAKADIPMLPVTHGEHYTKVHILLYTFALLAVSLLPYVIHMSGLLYLICALGLGARFLQWAVVLYRGTRPHAAINTFKYSIWYLFLLFIALLVDHYLLLNL.

Transmembrane regions (helical) follow at residues 25–45 (VVVL…RAGV), 47–67 (WTVL…AAAV), 95–115 (TGAL…LLTF), 119–139 (LTAW…TGFL), 147–167 (IVIG…AATG), 173–193 (PLLL…ALAI), 226–246 (ALLA…LYLI), and 279–299 (IWYL…LLNL).

The protein belongs to the UbiA prenyltransferase family. Protoheme IX farnesyltransferase subfamily.

The protein resides in the cell inner membrane. The enzyme catalyses heme b + (2E,6E)-farnesyl diphosphate + H2O = Fe(II)-heme o + diphosphate. The protein operates within porphyrin-containing compound metabolism; heme O biosynthesis; heme O from protoheme: step 1/1. Its function is as follows. Converts heme B (protoheme IX) to heme O by substitution of the vinyl group on carbon 2 of heme B porphyrin ring with a hydroxyethyl farnesyl side group. This Pseudomonas fluorescens (strain Pf0-1) protein is Protoheme IX farnesyltransferase 1.